A 586-amino-acid polypeptide reads, in one-letter code: Eukaryotic translation initiation factor 3 subunit D (586 aa).

The tract at residues 107–154 is disordered; the sequence is FGRGGGTVFRGRAQRGGAGQRGGRAGFQRVGAGRGQGGDRYYDNRGAR. Gly residues predominate over residues 108-131; that stretch reads GRGGGTVFRGRAQRGGAGQRGGRA. Residues 301 to 315 are RNA gate; sequence SLDLVTVNENAADAP. The span at 566 to 577 shows a compositional bias: acidic residues; that stretch reads FEEDDEAAEEEQ. The segment at 566–586 is disordered; sequence FEEDDEAAEEEQEAKGEVEEA.

This sequence belongs to the eIF-3 subunit D family. Component of the eukaryotic translation initiation factor 3 (eIF-3) complex.

Its subcellular location is the cytoplasm. Its function is as follows. mRNA cap-binding component of the eukaryotic translation initiation factor 3 (eIF-3) complex, which is involved in protein synthesis of a specialized repertoire of mRNAs and, together with other initiation factors, stimulates binding of mRNA and methionyl-tRNAi to the 40S ribosome. The eIF-3 complex specifically targets and initiates translation of a subset of mRNAs involved in cell proliferation. In the eIF-3 complex, eif3d specifically recognizes and binds the 7-methylguanosine cap of a subset of mRNAs. The chain is Eukaryotic translation initiation factor 3 subunit D from Emericella nidulans (strain FGSC A4 / ATCC 38163 / CBS 112.46 / NRRL 194 / M139) (Aspergillus nidulans).